The sequence spans 365 residues: Aminomethyltransferase (365 aa).

It belongs to the GcvT family. In terms of assembly, the glycine cleavage system is composed of four proteins: P, T, L and H.

It catalyses the reaction N(6)-[(R)-S(8)-aminomethyldihydrolipoyl]-L-lysyl-[protein] + (6S)-5,6,7,8-tetrahydrofolate = N(6)-[(R)-dihydrolipoyl]-L-lysyl-[protein] + (6R)-5,10-methylene-5,6,7,8-tetrahydrofolate + NH4(+). Functionally, the glycine cleavage system catalyzes the degradation of glycine. This is Aminomethyltransferase from Yersinia enterocolitica serotype O:8 / biotype 1B (strain NCTC 13174 / 8081).